The following is a 61-amino-acid chain: Ubiquinol-cytochrome c reductase complex assembly factor 6 (61 aa).

Topologically, residues 1-9 are mitochondrial matrix; that stretch reads MPAGVSWGQ. A helical transmembrane segment spans residues 10 to 32; it reads YLKFLGCALASMMAGSQAVHLYY. Over 33–61 the chain is Mitochondrial intermembrane; that stretch reads KPLEDLRVYIEQEQHSTQVDPTAKPPESA.

This sequence belongs to the UQCC6 family. In terms of assembly, interacts with sloth1; the interaction stabilizes both components. Expressed in the brain.

The protein resides in the mitochondrion inner membrane. It is found in the mitochondrion. Its function is as follows. Required for the assembly and stability of the mitochondrial ubiquinol-cytochrome c reductase complex (complex III (CIII) or cytochrome b-c1 complex), a multisubunit transmembrane complex that is part of the mitochondrial electron transport chain (ETC) which drives oxidative phosphorylation. This chain is Ubiquinol-cytochrome c reductase complex assembly factor 6, found in Drosophila melanogaster (Fruit fly).